The following is a 184-amino-acid chain: dCTP deaminase (184 aa).

Residues 107-112 (KSTYAR), 131-133 (TLE), glutamine 152, tyrosine 166, and glutamine 176 each bind dCTP. Glutamate 133 acts as the Proton donor/acceptor in catalysis.

The protein belongs to the dCTP deaminase family. Homotrimer.

The catalysed reaction is dCTP + H2O + H(+) = dUTP + NH4(+). The protein operates within pyrimidine metabolism; dUMP biosynthesis; dUMP from dCTP (dUTP route): step 1/2. Functionally, catalyzes the deamination of dCTP to dUTP. In Rhodospirillum centenum (strain ATCC 51521 / SW), this protein is dCTP deaminase.